A 319-amino-acid polypeptide reads, in one-letter code: tRNA-modifying protein YgfZ (319 aa).

Folate is bound by residues Trp27 and Trp189.

Belongs to the tRNA-modifying YgfZ family.

Its subcellular location is the cytoplasm. Functionally, folate-binding protein involved in regulating the level of ATP-DnaA and in the modification of some tRNAs. It is probably a key factor in regulatory networks that act via tRNA modification, such as initiation of chromosomal replication. The protein is tRNA-modifying protein YgfZ of Buchnera aphidicola subsp. Schizaphis graminum (strain Sg).